A 293-amino-acid chain; its full sequence is N(1)-aminopropylagmatine ureohydrolase (293 aa).

The Mn(2+) site is built by H105, D128, H130, D132, D210, and D212.

It belongs to the arginase family. Mn(2+) serves as cofactor.

Its subcellular location is the cytoplasm. It catalyses the reaction N(1)-(3-aminopropyl)agmatine + H2O = urea + spermidine. It participates in amine and polyamine biosynthesis; spermidine biosynthesis. Its function is as follows. Involved in the biosynthesis of polyamines which are thought to support the growth of thermophilic microorganisms under high-temperature conditions. It seems that long-chain and branched-chain of polyamines effectively stabilize DNA and RNA, respectively. Catalyzes the decarboxylation of N1-(3-aminopropyl)agmatine to yield spermidine and urea. It cannot use agmatine as substrate. This chain is N(1)-aminopropylagmatine ureohydrolase, found in Thermus thermophilus (strain ATCC 27634 / DSM 579 / HB8).